The chain runs to 299 residues: Glycerol-3-phosphate dehydrogenase [NAD(P)+] (299 aa).

NADPH is bound by residues W11, R30, H31, and K79. The sn-glycerol 3-phosphate site is built by K79, G107, and S109. A111 serves as a coordination point for NADPH. Residues K161, D214, S224, R225, and N226 each contribute to the sn-glycerol 3-phosphate site. K161 (proton acceptor) is an active-site residue. R225 lines the NADPH pocket. V249 and E251 together coordinate NADPH.

The protein belongs to the NAD-dependent glycerol-3-phosphate dehydrogenase family.

The protein resides in the cytoplasm. It carries out the reaction sn-glycerol 3-phosphate + NAD(+) = dihydroxyacetone phosphate + NADH + H(+). It catalyses the reaction sn-glycerol 3-phosphate + NADP(+) = dihydroxyacetone phosphate + NADPH + H(+). It participates in membrane lipid metabolism; glycerophospholipid metabolism. Functionally, catalyzes the reduction of the glycolytic intermediate dihydroxyacetone phosphate (DHAP) to sn-glycerol 3-phosphate (G3P), the key precursor for phospholipid synthesis. In Nitratiruptor sp. (strain SB155-2), this protein is Glycerol-3-phosphate dehydrogenase [NAD(P)+].